Reading from the N-terminus, the 397-residue chain is G2/mitotic-specific cyclin-B1 (397 aa).

The span at 1 to 17 (MALRVTRNTRLASSENQ) shows a compositional bias: polar residues. Residues 1 to 30 (MALRVTRNTRLASSENQGALPGKAAVANKP) form a disordered region.

The protein belongs to the cyclin family. Cyclin AB subfamily. As to quaternary structure, interacts with the CDK1 protein kinase to form a serine/threonine kinase holoenzyme complex also known as maturation promoting factor (MPF). The cyclin subunit imparts substrate specificity to the complex.

In terms of biological role, essential for the control of the cell cycle at the G2/M (mitosis) transition. The polypeptide is G2/mitotic-specific cyclin-B1 (ccnb1) (Carassius auratus (Goldfish)).